The sequence spans 160 residues: Phosphopantetheine adenylyltransferase (160 aa).

Substrate is bound at residue S9. ATP is bound by residues 9-10 (SF) and H17. Positions 41, 73, and 87 each coordinate substrate. Residues 88-90 (GLR), E98, and 122-128 (YSFVSSS) contribute to the ATP site.

It belongs to the bacterial CoaD family. As to quaternary structure, homohexamer. Requires Mg(2+) as cofactor.

Its subcellular location is the cytoplasm. The enzyme catalyses (R)-4'-phosphopantetheine + ATP + H(+) = 3'-dephospho-CoA + diphosphate. Its pathway is cofactor biosynthesis; coenzyme A biosynthesis; CoA from (R)-pantothenate: step 4/5. Functionally, reversibly transfers an adenylyl group from ATP to 4'-phosphopantetheine, yielding dephospho-CoA (dPCoA) and pyrophosphate. The chain is Phosphopantetheine adenylyltransferase from Mycolicibacterium vanbaalenii (strain DSM 7251 / JCM 13017 / BCRC 16820 / KCTC 9966 / NRRL B-24157 / PYR-1) (Mycobacterium vanbaalenii).